The primary structure comprises 103 residues: Large ribosomal subunit protein bL21 (103 aa).

It belongs to the bacterial ribosomal protein bL21 family. As to quaternary structure, part of the 50S ribosomal subunit. Contacts protein L20.

This protein binds to 23S rRNA in the presence of protein L20. The protein is Large ribosomal subunit protein bL21 of Alcanivorax borkumensis (strain ATCC 700651 / DSM 11573 / NCIMB 13689 / SK2).